We begin with the raw amino-acid sequence, 147 residues long: Large ribosomal subunit protein bL9 (147 aa).

This sequence belongs to the bacterial ribosomal protein bL9 family.

Its function is as follows. Binds to the 23S rRNA. This chain is Large ribosomal subunit protein bL9, found in Helicobacter hepaticus (strain ATCC 51449 / 3B1).